A 196-amino-acid chain; its full sequence is Carnitine operon protein CaiE (196 aa).

Residues 174–196 (QPLRQMEENRPRLQGTTDVTPKR) form a disordered region. Residues 187-196 (QGTTDVTPKR) are compositionally biased toward polar residues.

It belongs to the transferase hexapeptide repeat family.

Its pathway is amine and polyamine metabolism; carnitine metabolism. Overproduction of CaiE stimulates the activity of CaiB and CaiD. The chain is Carnitine operon protein CaiE (caiE) from Escherichia coli (strain K12).